We begin with the raw amino-acid sequence, 634 residues long: Probable potassium transport system protein Kup (634 aa).

The next 12 membrane-spanning stretches (helical) occupy residues 21-41, 61-81, 110-130, 148-168, 180-200, 217-237, 258-278, 296-316, 348-368, 377-397, 408-428, and 432-452; these read IILSAIGVVFGDIGTSPLYTL, ILSLIFWAMMLVVTIKYVAVI, IYIVGILGIFGTSLFFGDGVI, PHMKAFVVPITLAVLILLFLC, FGPITLLWFIAIGVVGVYNIA, FFLEHGWHSMFVLGAVVLAVT, WMYVVLPMLALNYLGQGALVL, GLYPMIALATAAAVIASQALI, IYVPTVNWTLLTLVILTVIGF, AYGVAVTGTMMITTVLMIIYA, LWMMAIVFIAVDGAFFYANII, and DGAWFPLLLGVVIFTFMRTWL.

It belongs to the HAK/KUP transporter (TC 2.A.72) family.

The protein localises to the cell inner membrane. The enzyme catalyses K(+)(in) + H(+)(in) = K(+)(out) + H(+)(out). Transport of potassium into the cell. Likely operates as a K(+):H(+) symporter. In Xylella fastidiosa (strain 9a5c), this protein is Probable potassium transport system protein Kup.